Reading from the N-terminus, the 187-residue chain is Calmodulin-like protein 1 (187 aa).

At Ala2 the chain carries N-acetylalanine. 4 EF-hand domains span residues 8-43 (EQIVEFREAFSLFDKDGDGSITTKELGTVMRSLGQN), 44-79 (PTEAELQDMISEVDADSNGNIEFKEFLGLMARKLRD), 81-116 (DSEEELKEAFRVFDKDQNGFISAAELRHVMANIGER), and 117-152 (LTDEEVGEMISEADVDGDGQINYEEFVKCMMAKKRR). Ca(2+)-binding residues include Asp21, Asp23, Asp25, Ser27, Glu32, Asp57, Asp59, Asn61, Asn63, Glu68, Asp94, Asp96, Asn98, Glu105, Asp130, Asp132, Asp134, Gln136, and Glu141. Residues 153 to 187 (KRIEEKREHDGGSRTKSAGPSAAPASKRGQKCVIL) form a disordered region. The segment covering 154 to 165 (RIEEKREHDGGS) has biased composition (basic and acidic residues). Residues 169–178 (SAGPSAAPAS) show a composition bias toward low complexity. Cys184 is modified (cysteine methyl ester). Cys184 is lipidated: S-farnesyl cysteine. A propeptide spans 185 to 187 (VIL) (removed in mature form).

It belongs to the calmodulin family. Expressed in roots, etiolated shoots and flowers.

It localises to the membrane. Its function is as follows. Calcium-binding protein that binds and activates CAMK1, a calcium/calmodulin-dependent kinase. This chain is Calmodulin-like protein 1 (CML1), found in Oryza sativa subsp. indica (Rice).